Consider the following 348-residue polypeptide: Protein RecA (348 aa).

Position 64 to 71 (64 to 71) interacts with ATP; sequence GPESSGKT. Residues 328 to 348 form a disordered region; that stretch reads DTGGAAPAQEDEAQAQEELEF. Over residues 336–348 the composition is skewed to acidic residues; it reads QEDEAQAQEELEF.

This sequence belongs to the RecA family.

It is found in the cytoplasm. Its function is as follows. Can catalyze the hydrolysis of ATP in the presence of single-stranded DNA, the ATP-dependent uptake of single-stranded DNA by duplex DNA, and the ATP-dependent hybridization of homologous single-stranded DNAs. It interacts with LexA causing its activation and leading to its autocatalytic cleavage. This Bacillus licheniformis (strain ATCC 14580 / DSM 13 / JCM 2505 / CCUG 7422 / NBRC 12200 / NCIMB 9375 / NCTC 10341 / NRRL NRS-1264 / Gibson 46) protein is Protein RecA.